We begin with the raw amino-acid sequence, 387 residues long: Sharpin (387 aa).

Residues 1–180 (MAPPAGGAAA…EREELAGSLA (180 aa)) form a self-association region. Positions 122–132 (EGQNGSKSNSP) are enriched in polar residues. The disordered stretch occupies residues 122-169 (EGQNGSKSNSPPALGPEACPVSLPSPPEASTLKGPPPEADLPRSPGNL). Serine 165 is modified (phosphoserine). The segment at 175–310 (LAGSLARAIA…SAPREAPATG (136 aa)) is interaction with SHANK1. The region spanning 219 to 288 (IRLQVTLEDA…PERSLASYGV (70 aa)) is the Ubiquitin-like domain. Residues 305–349 (EAPATGPSPQHPQKMDGELGRLFPPSLGLPPGPQPAASSLPSPLQ) are disordered. The residue at position 312 (serine 312) is a Phosphoserine. A compositionally biased stretch (low complexity) spans 339 to 349 (PAASSLPSPLQ). The RanBP2-type zinc finger occupies 348–377 (LQPSWSCPSCTFINAPDRPGCEMCSTQRPC).

Monomer and homodimer. Component of the LUBAC complex (linear ubiquitin chain assembly complex) which consists of SHARPIN, RBCK1 and RNF31. LUBAC has a MW of approximately 600 kDa suggesting a heteromultimeric assembly of its subunits. Associates with the TNF-R1 signaling complex (TNF-RSC) in a stimulation-dependent manner. Interacts with EYA1, EYA2, SHANK1 and SHANK3 (via ANK repeats). As to expression, highly expressed in skeletal muscle and placenta and at lower levels in brain, heart, colon without mucosa, thymus, spleen, kidney, liver, small intestine, lung and peripheral blood leukocytes. Up-regulated in various tumor tissues such as kidney, liver, ovary and pancreas tumors.

Its subcellular location is the cytoplasm. The protein resides in the cytosol. It localises to the synapse. Its pathway is protein modification; protein ubiquitination. In terms of biological role, component of the LUBAC complex which conjugates linear polyubiquitin chains in a head-to-tail manner to substrates and plays a key role in NF-kappa-B activation and regulation of inflammation. LUBAC conjugates linear polyubiquitin to IKBKG and RIPK1 and is involved in activation of the canonical NF-kappa-B and the JNK signaling pathways. Linear ubiquitination mediated by the LUBAC complex interferes with TNF-induced cell death and thereby prevents inflammation. LUBAC is recruited to the TNF-R1 signaling complex (TNF-RSC) following polyubiquitination of TNF-RSC components by BIRC2 and/or BIRC3 and to conjugate linear polyubiquitin to IKBKG and possibly other components contributing to the stability of the complex. The LUBAC complex is also involved in innate immunity by conjugating linear polyubiquitin chains at the surface of bacteria invading the cytosol to form the ubiquitin coat surrounding bacteria. LUBAC is not able to initiate formation of the bacterial ubiquitin coat, and can only promote formation of linear polyubiquitins on pre-existing ubiquitin. The bacterial ubiquitin coat acts as an 'eat-me' signal for xenophagy and promotes NF-kappa-B activation. Together with OTULIN, the LUBAC complex regulates the canonical Wnt signaling during angiogenesis. The chain is Sharpin from Homo sapiens (Human).